Here is a 501-residue protein sequence, read N- to C-terminus: Endoglucanase 8 (501 aa).

Positions 1 to 35 (MKPRSSRDGHNAAAAAALLLAALVLSGDVLPAVVA) are cleaved as a signal peptide. D95 (nucleophile) is an active-site residue. Residue N298 is glycosylated (N-linked (GlcNAc...) asparagine). The active site involves H414. Residue N462 is glycosylated (N-linked (GlcNAc...) asparagine). D465 is a catalytic residue. N469 carries N-linked (GlcNAc...) asparagine glycosylation. Residue E474 is part of the active site.

It belongs to the glycosyl hydrolase 9 (cellulase E) family.

The protein resides in the secreted. It carries out the reaction Endohydrolysis of (1-&gt;4)-beta-D-glucosidic linkages in cellulose, lichenin and cereal beta-D-glucans.. The protein is Endoglucanase 8 of Oryza sativa subsp. japonica (Rice).